A 288-amino-acid chain; its full sequence is Ubiquitin thioesterase otubain-like (288 aa).

Residues 76–275 (SHIRFIRGDG…PGHYDLIYKA (200 aa)) enclose the OTU domain. Asp84 is a catalytic residue. Cys87 serves as the catalytic Nucleophile. A substrate-binding site is contributed by Ile175. Active-site residues include His244 and His268.

This sequence belongs to the peptidase C65 family.

It catalyses the reaction Thiol-dependent hydrolysis of ester, thioester, amide, peptide and isopeptide bonds formed by the C-terminal Gly of ubiquitin (a 76-residue protein attached to proteins as an intracellular targeting signal).. Functionally, hydrolase that can remove conjugated ubiquitin from proteins and plays an important regulatory role at the level of protein turnover by preventing degradation. Specifically cleaves 'Lys-48'-linked polyubiquitin. The polypeptide is Ubiquitin thioesterase otubain-like (Caenorhabditis briggsae).